We begin with the raw amino-acid sequence, 313 residues long: Methionyl-tRNA formyltransferase (313 aa).

110–113 serves as a coordination point for (6S)-5,6,7,8-tetrahydrofolate; that stretch reads SLLP.

This sequence belongs to the Fmt family.

It catalyses the reaction L-methionyl-tRNA(fMet) + (6R)-10-formyltetrahydrofolate = N-formyl-L-methionyl-tRNA(fMet) + (6S)-5,6,7,8-tetrahydrofolate + H(+). Functionally, attaches a formyl group to the free amino group of methionyl-tRNA(fMet). The formyl group appears to play a dual role in the initiator identity of N-formylmethionyl-tRNA by promoting its recognition by IF2 and preventing the misappropriation of this tRNA by the elongation apparatus. The protein is Methionyl-tRNA formyltransferase of Enterococcus faecalis (strain ATCC 700802 / V583).